A 267-amino-acid polypeptide reads, in one-letter code: Apolipoprotein A-I (267 aa).

Residues 1 to 18 (MKAAVLTLAVLFLTGSQA) form the signal peptide. 2 tandem repeats follow at residues 68–89 (LKLLDNWDSVTSTFSKLREQLG) and 90–111 (PVTQEFWDNLEKETEGLRQEMS). A 10 X approximate tandem repeats region spans residues 68-267 (LKLLDNWDSV…EEYTKKLNTQ (200 aa)). The residue at position 110 (Met110) is a Methionine sulfoxide. The 3; half-length repeat unit spans residues 112–122 (KDLEEVKAKVQ). Tandem repeats lie at residues 123–144 (PYLDDFQKKWQEEMELYRQKVE), 145–166 (PLRAELQEGARQKLHELQEKLS), 167–188 (PLGEEMRDRARAHVDALRTHLA), 189–210 (PYSDELRQRLAARLEALKENGG), and 211–232 (ARLAEYHAKATEHLSTLSEKAK). At Met136 the chain carries Methionine sulfoxide. The stretch at 233–243 (PALEDLRQGLL) is one 9; half-length repeat. Repeat 10 spans residues 244–267 (PVLESFKVSFLSALEEYTKKLNTQ).

The protein belongs to the apolipoprotein A1/A4/E family. As to quaternary structure, homodimer. Interacts with APOA1BP and CLU. Component of a sperm activating protein complex (SPAP), consisting of APOA1, an immunoglobulin heavy chain, an immunoglobulin light chain and albumin. Interacts with NDRG1. Interacts with SCGB3A2. Interacts with NAXE and YJEFN3. Post-translationally, glycosylated. In terms of processing, palmitoylated. Phosphorylation sites are present in the extracellular medium. In terms of tissue distribution, major protein of plasma HDL, also found in chylomicrons.

The protein localises to the secreted. Participates in the reverse transport of cholesterol from tissues to the liver for excretion by promoting cholesterol efflux from tissues and by acting as a cofactor for the lecithin cholesterol acyltransferase (LCAT). As part of the SPAP complex, activates spermatozoa motility. This Pan paniscus (Pygmy chimpanzee) protein is Apolipoprotein A-I (APOA1).